The primary structure comprises 319 residues: Heavy metal-associated isoprenylated plant protein 9 (319 aa).

Basic and acidic residues-rich tracts occupy residues 1 to 11 (MGEEVKPEAKE) and 24 to 45 (EEKKKDVAEEKKVAAEEEKPKE). The segment at 1–57 (MGEEVKPEAKEAASAPQAVPAEEEEKKKDVAEEKKVAAEEEKPKEEEEPQPPPPPPP) is disordered. Positions 21 to 48 (AEEEEKKKDVAEEKKVAAEEEKPKEEEE) form a coiled coil. HMA domains follow at residues 55–118 (PPPF…KRMA) and 144–208 (LTTV…KQAR). A metal cation contacts are provided by Cys-66, Cys-69, Cys-155, and Cys-158. Residues 207-282 (ARIVPQPDPE…RDNEMTAMAQ (76 aa)) are disordered. A compositionally biased stretch (basic and acidic residues) spans 224 to 254 (QEEKKEESGEGNEKPPETGEEKEEEKKKEGE). Positions 255–268 (ENGEEGGGEEAAAT) are enriched in acidic residues. Cys-316 is modified (cysteine methyl ester). Cys-316 is lipidated: S-farnesyl cysteine. Residues 317-319 (CIS) constitute a propeptide, removed in mature form.

This sequence belongs to the HIPP family.

In terms of biological role, heavy-metal-binding protein. This is Heavy metal-associated isoprenylated plant protein 9 from Arabidopsis thaliana (Mouse-ear cress).